A 249-amino-acid chain; its full sequence is Very-long-chain (3R)-3-hydroxyacyl-CoA dehydratase 1 (249 aa).

The segment at 1-22 (MASSEEDGTNGGASEAGEEKEA) is disordered. The Cytoplasmic segment spans residues 1-36 (MASSEEDGTNGGASEAGEEKEAPGRRRRLGLLATVW). Residues 37–56 (LTFYNIAMTAGWLVLAIAMV) traverse the membrane as a helical segment. Topologically, residues 57 to 75 (RFYMEKGTHKGLYKSIQKT) are lumenal. A helical transmembrane segment spans residues 76–92 (LKFFQTFALLEIVHCLI). Residues 93-102 (GIVPTSVIVA) are Cytoplasmic-facing. A helical membrane pass occupies residues 103-120 (GVQVSSRIFMVWLITHSI). Residues 121–126 (KPIQNE) lie on the Lumenal side of the membrane. Residues 127 to 141 (ESVVLFLVAWTVTEI) form a helical membrane-spanning segment. At 142–164 (TRYSFYTFSLLDHLPYFIKWARY) the chain is on the cytoplasmic side. Residues 165 to 182 (NFFIILYPVGVVGELLTI) form a helical membrane-spanning segment. Residues Y171 and E178 contribute to the active site. Over 183–212 (YAALPYVKKTGMFSIRLPNKYNVSFDYYYF) the chain is Lumenal. N-linked (GlcNAc...) asparagine glycosylation occurs at N204. A helical membrane pass occupies residues 213-230 (LLITMASYIPLFPQLYFH). Over 231–249 (MLRQRRKVLHGEVIVEKDD) the chain is Cytoplasmic.

This sequence belongs to the very long-chain fatty acids dehydratase HACD family. As to quaternary structure, may interact with enzymes of the ELO family (including ELOVL1); with those enzymes that mediate condensation, the first of the four steps of the reaction cycle responsible for fatty acids elongation, may be part of a larger fatty acids elongase complex. Interacts with TECR. As to expression, skeletal muscle.

The protein localises to the endoplasmic reticulum membrane. It carries out the reaction a very-long-chain (3R)-3-hydroxyacyl-CoA = a very-long-chain (2E)-enoyl-CoA + H2O. The catalysed reaction is (3R)-hydroxyhexadecanoyl-CoA = (2E)-hexadecenoyl-CoA + H2O. It catalyses the reaction (3R)-hydroxyoctadecanoyl-CoA = (2E)-octadecenoyl-CoA + H2O. The enzyme catalyses (3R)-hydroxyeicosanoyl-CoA = (2E)-eicosenoyl-CoA + H2O. It carries out the reaction (3R)-hydroxydocosanoyl-CoA = (2E)-docosenoyl-CoA + H2O. The catalysed reaction is (3R)-hydroxytetracosanoyl-CoA = (2E)-tetracosenoyl-CoA + H2O. It catalyses the reaction (3R)-hydroxyhexacosanoyl-CoA = (2E)-hexacosenoyl-CoA + H2O. It functions in the pathway lipid metabolism; fatty acid biosynthesis. Catalyzes the third of the four reactions of the long-chain fatty acids elongation cycle. This endoplasmic reticulum-bound enzymatic process, allows the addition of two carbons to the chain of long- and very long-chain fatty acids/VLCFAs per cycle. This enzyme catalyzes the dehydration of the 3-hydroxyacyl-CoA intermediate into trans-2,3-enoyl-CoA, within each cycle of fatty acid elongation. Thereby, it participates in the production of VLCFAs of different chain lengths that are involved in multiple biological processes as precursors of membrane lipids and lipid mediators. This Canis lupus familiaris (Dog) protein is Very-long-chain (3R)-3-hydroxyacyl-CoA dehydratase 1 (HACD1).